The primary structure comprises 240 residues: Phosducin-like protein 2 (240 aa).

A Phosducin domain is found at 38 to 201 (QQEAMVKPYE…LEWKLSEVGA (164 aa)). The interval 89-240 (FGELREISGN…DSSGSDTEAK (152 aa)) is thioredoxin fold.

This sequence belongs to the phosducin family. As to quaternary structure, interacts with the CCT chaperonin complex and actin. Testis-specific (at protein level).

The protein resides in the endoplasmic reticulum. Its function is as follows. Essential for male fertility, spermiogenesis and acrosome formation. The sequence is that of Phosducin-like protein 2 (Pdcl2) from Mus musculus (Mouse).